The primary structure comprises 549 residues: Chaperonin GroEL (549 aa).

ATP is bound by residues 29–32 (TLGP), Lys-50, 86–90 (DGTTT), Gly-414, 478–480 (NAA), and Asp-494.

It belongs to the chaperonin (HSP60) family. In terms of assembly, forms a cylinder of 14 subunits composed of two heptameric rings stacked back-to-back. Interacts with the co-chaperonin GroES.

Its subcellular location is the cytoplasm. The enzyme catalyses ATP + H2O + a folded polypeptide = ADP + phosphate + an unfolded polypeptide.. Functionally, together with its co-chaperonin GroES, plays an essential role in assisting protein folding. The GroEL-GroES system forms a nano-cage that allows encapsulation of the non-native substrate proteins and provides a physical environment optimized to promote and accelerate protein folding. The sequence is that of Chaperonin GroEL from Psychrobacter cryohalolentis (strain ATCC BAA-1226 / DSM 17306 / VKM B-2378 / K5).